The chain runs to 347 residues: tRNA N6-adenosine threonylcarbamoyltransferase (347 aa).

Residues His117 and His121 each coordinate Fe cation. Residues 140 to 144, Asp173, Gly186, and Asn280 contribute to the substrate site; that span reads LVSGG. Asp308 lines the Fe cation pocket.

It belongs to the KAE1 / TsaD family. Fe(2+) serves as cofactor.

The protein resides in the cytoplasm. The catalysed reaction is L-threonylcarbamoyladenylate + adenosine(37) in tRNA = N(6)-L-threonylcarbamoyladenosine(37) in tRNA + AMP + H(+). Required for the formation of a threonylcarbamoyl group on adenosine at position 37 (t(6)A37) in tRNAs that read codons beginning with adenine. Is involved in the transfer of the threonylcarbamoyl moiety of threonylcarbamoyl-AMP (TC-AMP) to the N6 group of A37, together with TsaE and TsaB. TsaD likely plays a direct catalytic role in this reaction. This Psychrobacter sp. (strain PRwf-1) protein is tRNA N6-adenosine threonylcarbamoyltransferase.